A 92-amino-acid polypeptide reads, in one-letter code: Small ribosomal subunit protein uS19 (92 aa).

Belongs to the universal ribosomal protein uS19 family.

Protein S19 forms a complex with S13 that binds strongly to the 16S ribosomal RNA. This chain is Small ribosomal subunit protein uS19, found in Allorhizobium ampelinum (strain ATCC BAA-846 / DSM 112012 / S4) (Agrobacterium vitis (strain S4)).